A 522-amino-acid chain; its full sequence is Putative cysteine ligase BshC (522 aa).

Residues 436–469 are a coiled coil; the sequence is SWAQAEKAKALKQLEDIEKKLRKAEERKHDDVIK.

The protein belongs to the BshC family.

The chain is Putative cysteine ligase BshC from Cytophaga hutchinsonii (strain ATCC 33406 / DSM 1761 / CIP 103989 / NBRC 15051 / NCIMB 9469 / D465).